The primary structure comprises 514 residues: Na(+)/H(+) antiporter NhaB (514 aa).

Transmembrane regions (helical) follow at residues leucine 23–alanine 43, proline 63–alanine 83, leucine 97–phenylalanine 117, leucine 120–phenylalanine 140, phenylalanine 144–isoleucine 164, leucine 202–proline 222, phenylalanine 238–methionine 258, alanine 303–isoleucine 323, leucine 357–isoleucine 377, leucine 391–isoleucine 411, alanine 447–isoleucine 467, and valine 475–phenylalanine 495.

Belongs to the NhaB Na(+)/H(+) (TC 2.A.34) antiporter family.

It localises to the cell inner membrane. The catalysed reaction is 2 Na(+)(in) + 3 H(+)(out) = 2 Na(+)(out) + 3 H(+)(in). In terms of biological role, na(+)/H(+) antiporter that extrudes sodium in exchange for external protons. The polypeptide is Na(+)/H(+) antiporter NhaB (Salmonella choleraesuis (strain SC-B67)).